A 492-amino-acid chain; its full sequence is Catalase (492 aa).

Residues histidine 65 and asparagine 138 contribute to the active site. Residue tyrosine 348 coordinates heme.

It belongs to the catalase family. Homotetramer. It depends on heme as a cofactor.

It localises to the cytoplasm. It is found in the cytosol. Its subcellular location is the peroxisome matrix. It carries out the reaction 2 H2O2 = O2 + 2 H2O. Catalyzes the degradation of hydrogen peroxide (H(2)O(2)) generated by peroxisomal oxidases to water and oxygen, thereby protecting cells from the toxic effects of hydrogen peroxide. The polypeptide is Catalase (CATA) (Triticum aestivum (Wheat)).